Consider the following 122-residue polypeptide: Ribonuclease pancreatic (122 aa).

Substrate is bound by residues K6 and R9. H11 serves as the catalytic Proton acceptor. 4 disulfides stabilise this stretch: C25/C83, C39/C94, C57/C109, and C64/C71. Residues 40-44, K65, and R84 each bind substrate; that span reads KPVNT. Catalysis depends on H117, which acts as the Proton donor.

Belongs to the pancreatic ribonuclease family. As to quaternary structure, monomer. Interacts with and forms tight 1:1 complexes with RNH1. Dimerization of two such complexes may occur. Interaction with RNH1 inhibits this protein. In terms of tissue distribution, pancreas.

The protein localises to the secreted. The enzyme catalyses an [RNA] containing cytidine + H2O = an [RNA]-3'-cytidine-3'-phosphate + a 5'-hydroxy-ribonucleotide-3'-[RNA].. The catalysed reaction is an [RNA] containing uridine + H2O = an [RNA]-3'-uridine-3'-phosphate + a 5'-hydroxy-ribonucleotide-3'-[RNA].. In terms of biological role, endonuclease that catalyzes the cleavage of RNA on the 3' side of pyrimidine nucleotides. Acts on single-stranded and double-stranded RNA. This is Ribonuclease pancreatic from Notamacropus rufogriseus (Red-necked wallaby).